A 191-amino-acid chain; its full sequence is Adenylate kinase (191 aa).

Glycine 12–threonine 17 is a binding site for ATP. The tract at residues serine 34–valine 63 is NMP. Residues threonine 35, arginine 40, glutamate 61–valine 63, glycine 88–arginine 91, and glutamine 95 each bind AMP. The tract at residues glycine 130 to aspartate 136 is LID. Arginine 131 contacts ATP. The AMP site is built by arginine 133 and arginine 145. Arginine 173 is an ATP binding site.

The protein belongs to the adenylate kinase family. In terms of assembly, monomer.

The protein localises to the cytoplasm. The enzyme catalyses AMP + ATP = 2 ADP. It functions in the pathway purine metabolism; AMP biosynthesis via salvage pathway; AMP from ADP: step 1/1. Its function is as follows. Catalyzes the reversible transfer of the terminal phosphate group between ATP and AMP. Plays an important role in cellular energy homeostasis and in adenine nucleotide metabolism. The sequence is that of Adenylate kinase from Helicobacter pylori (strain ATCC 700392 / 26695) (Campylobacter pylori).